Reading from the N-terminus, the 213-residue chain is Protein Tpen_0748 (213 aa).

The 201-residue stretch at 7-207 folds into the AMMECR1 domain; that stretch reads EEGALLVRLA…ETTPKGDVVE (201 aa).

In Thermofilum pendens (strain DSM 2475 / Hrk 5), this protein is Protein Tpen_0748.